Consider the following 730-residue polypeptide: Arginine decarboxylase 1B, chloroplastic (730 aa).

The N-terminal 37 residues, 1–37, are a transit peptide targeting the chloroplast; that stretch reads MPALGCCVDAAVSPPPGYSFLWDSSLPAPEIFPSGVP. At Lys-157 the chain carries N6-(pyridoxal phosphate)lysine. Pyridoxal 5'-phosphate contacts are provided by residues Ser-309, Gly-346, and 395-398; that span reads ESGR. 460 to 461 contacts substrate; the sequence is YA. Residue Cys-548 is the Proton donor; shared with dimeric partner of the active site. Residue Asp-549 coordinates substrate. Tyr-590 is a binding site for pyridoxal 5'-phosphate.

This sequence belongs to the Orn/Lys/Arg decarboxylase class-II family. SpeA subfamily. The cofactor is Mg(2+). Requires pyridoxal 5'-phosphate as cofactor.

Its subcellular location is the plastid. It localises to the chloroplast. It catalyses the reaction L-arginine + H(+) = agmatine + CO2. It functions in the pathway alkaloid biosynthesis; nicotine biosynthesis. Its pathway is amine and polyamine biosynthesis; agmatine biosynthesis; agmatine from L-arginine: step 1/1. Functionally, involved in the biosynthesis of pyridine alkaloid natural products, leading mainly to the production of anabasine, anatabine, nicotine and nornicotine, effective deterrents against herbivores with antiparasitic and pesticide properties (neurotoxins); nornicotine serves as the precursor in the synthesis of the carcinogen compound N'-nitrosonornicotine (NNN). Required for the biosynthesis of putrescine. Catalyzes the first step of polyamine (PA) biosynthesis to produce putrescine from arginine. This Nicotiana tabacum (Common tobacco) protein is Arginine decarboxylase 1B, chloroplastic.